The primary structure comprises 92 residues: UPF0473 protein BCE33L4129 (92 aa).

Belongs to the UPF0473 family.

The polypeptide is UPF0473 protein BCE33L4129 (Bacillus cereus (strain ZK / E33L)).